The sequence spans 365 residues: MNRPIVIAAGGTGGHFFPAEAVATVLAERGHDLVLMTDARHGRRETGLFKDRPQYVLDGAGVAGKGLSGKVHGVLALLRGMMEARRILASLDAAAVVGFGGYPSIPPLTASRLLPSAKRPQMVIHEGNAVLGQANAFLSRFSPLIATSYAKVARLPENARTTLTGMPVREGIEALFGHVYAPPEDRINLLVWGGSLGARVFSEIVPQALAALSEDFRKRLKVTQQIKADDLERVRAIYENAGIEVEAAPFFTNVPACLKNAHLVIGRAGGSSVAELAMAGLPSILVPLPIAASDEQGANGQALVDAGAAWMIRQPDFTAAALTALLTDLFSHPEKLENAAKAAHLCARPHAAAKVADLIESALRS.

UDP-N-acetyl-alpha-D-glucosamine-binding positions include 12-14 (TGG), N128, R169, S195, and Q296.

Belongs to the glycosyltransferase 28 family. MurG subfamily.

It is found in the cell inner membrane. The catalysed reaction is di-trans,octa-cis-undecaprenyl diphospho-N-acetyl-alpha-D-muramoyl-L-alanyl-D-glutamyl-meso-2,6-diaminopimeloyl-D-alanyl-D-alanine + UDP-N-acetyl-alpha-D-glucosamine = di-trans,octa-cis-undecaprenyl diphospho-[N-acetyl-alpha-D-glucosaminyl-(1-&gt;4)]-N-acetyl-alpha-D-muramoyl-L-alanyl-D-glutamyl-meso-2,6-diaminopimeloyl-D-alanyl-D-alanine + UDP + H(+). The protein operates within cell wall biogenesis; peptidoglycan biosynthesis. Cell wall formation. Catalyzes the transfer of a GlcNAc subunit on undecaprenyl-pyrophosphoryl-MurNAc-pentapeptide (lipid intermediate I) to form undecaprenyl-pyrophosphoryl-MurNAc-(pentapeptide)GlcNAc (lipid intermediate II). This Gluconobacter oxydans (strain 621H) (Gluconobacter suboxydans) protein is UDP-N-acetylglucosamine--N-acetylmuramyl-(pentapeptide) pyrophosphoryl-undecaprenol N-acetylglucosamine transferase.